We begin with the raw amino-acid sequence, 24 residues long: Humanin-like 11 (24 aa).

Belongs to the humanin family.

The protein resides in the secreted. It is found in the cytoplasm. In terms of biological role, plays a role as a neuroprotective and antiapoptotic factor. This is Humanin-like 11 from Homo sapiens (Human).